A 556-amino-acid polypeptide reads, in one-letter code: 2-succinyl-5-enolpyruvyl-6-hydroxy-3-cyclohexene-1-carboxylate synthase (556 aa).

This sequence belongs to the TPP enzyme family. MenD subfamily. In terms of assembly, homodimer. The cofactor is Mg(2+). Mn(2+) is required as a cofactor. Thiamine diphosphate serves as cofactor.

The catalysed reaction is isochorismate + 2-oxoglutarate + H(+) = 5-enolpyruvoyl-6-hydroxy-2-succinyl-cyclohex-3-ene-1-carboxylate + CO2. The protein operates within quinol/quinone metabolism; 1,4-dihydroxy-2-naphthoate biosynthesis; 1,4-dihydroxy-2-naphthoate from chorismate: step 2/7. Its pathway is quinol/quinone metabolism; menaquinone biosynthesis. In terms of biological role, catalyzes the thiamine diphosphate-dependent decarboxylation of 2-oxoglutarate and the subsequent addition of the resulting succinic semialdehyde-thiamine pyrophosphate anion to isochorismate to yield 2-succinyl-5-enolpyruvyl-6-hydroxy-3-cyclohexene-1-carboxylate (SEPHCHC). The sequence is that of 2-succinyl-5-enolpyruvyl-6-hydroxy-3-cyclohexene-1-carboxylate synthase from Salmonella typhimurium (strain LT2 / SGSC1412 / ATCC 700720).